Consider the following 411-residue polypeptide: UPF0761 membrane protein PA0951 (411 aa).

6 helical membrane passes run 36–56 (LFAVVPMMTVMFSMLSLIPAF), 92–112 (HLTWVGVVFLAVTAFTMLVTI), 132–152 (FLLYWAILSLGPLLLGAGFAV), 174–194 (LLGLMPLAFSVAAFTLLYSAV), 207–229 (GGVFTAVLFEAAKTLFGLYVSLF), and 244–264 (IFLLWIYLSWMIVLFGAVLVC).

The protein belongs to the UPF0761 family.

It localises to the cell inner membrane. In Pseudomonas aeruginosa (strain ATCC 15692 / DSM 22644 / CIP 104116 / JCM 14847 / LMG 12228 / 1C / PRS 101 / PAO1), this protein is UPF0761 membrane protein PA0951.